A 324-amino-acid chain; its full sequence is Pyruvate synthase subunit PorB (324 aa).

Positions 26, 29, and 57 each coordinate [4Fe-4S] cluster. A disordered region spans residues 150–172 (TGNQRSGSTPPGSDTTTAPVGKK). The segment covering 155–166 (SGSTPPGSDTTT) has biased composition (low complexity). Cysteine 228 is a [4Fe-4S] cluster binding site.

As to quaternary structure, heterotetramer of one alpha, one beta, one delta and one gamma chain. It depends on [4Fe-4S] cluster as a cofactor.

It carries out the reaction 2 oxidized [2Fe-2S]-[ferredoxin] + pyruvate + CoA = 2 reduced [2Fe-2S]-[ferredoxin] + acetyl-CoA + CO2 + H(+). This Thermotoga maritima (strain ATCC 43589 / DSM 3109 / JCM 10099 / NBRC 100826 / MSB8) protein is Pyruvate synthase subunit PorB (porB).